Here is a 37-residue protein sequence, read N- to C-terminus: Large ribosomal subunit protein bL36c (37 aa).

This sequence belongs to the bacterial ribosomal protein bL36 family.

The protein resides in the plastid. It localises to the chloroplast. This Chlamydomonas reinhardtii (Chlamydomonas smithii) protein is Large ribosomal subunit protein bL36c (rpl36).